The primary structure comprises 663 residues: Methionine--tRNA ligase (663 aa).

The 'HIGH' region motif lies at 13–23; the sequence is PYTNGPCHLGH. Residues cysteine 144, cysteine 147, cysteine 156, and cysteine 160 each contribute to the Zn(2+) site. The short motif at 326–330 is the 'KMSKS' region element; sequence KFSKS. An ATP-binding site is contributed by lysine 329. Positions 565 to 663 constitute a tRNA-binding domain; that stretch reads EFGKMKLIVG…QAVEPGTPIR (99 aa).

The protein belongs to the class-I aminoacyl-tRNA synthetase family. MetG type 1 subfamily. As to quaternary structure, homodimer. Zn(2+) serves as cofactor.

The protein localises to the cytoplasm. The catalysed reaction is tRNA(Met) + L-methionine + ATP = L-methionyl-tRNA(Met) + AMP + diphosphate. Functionally, is required not only for elongation of protein synthesis but also for the initiation of all mRNA translation through initiator tRNA(fMet) aminoacylation. In Methanosphaerula palustris (strain ATCC BAA-1556 / DSM 19958 / E1-9c), this protein is Methionine--tRNA ligase.